A 438-amino-acid chain; its full sequence is Xylose isomerase (438 aa).

Residues His-100 and Asp-103 contribute to the active site. Glu-231, Glu-267, His-270, Asp-295, Asp-306, Asp-308, and Asp-338 together coordinate Mg(2+).

It belongs to the xylose isomerase family. In terms of assembly, homotetramer. Mg(2+) is required as a cofactor.

The protein localises to the cytoplasm. It carries out the reaction alpha-D-xylose = alpha-D-xylulofuranose. The sequence is that of Xylose isomerase from Caldanaerobacter subterraneus subsp. yonseiensis (Thermoanaerobacter yonseiensis).